The chain runs to 493 residues: Voltage-gated potassium channel regulatory subunit KCNF1 (493 aa).

Over 1-183 (MDASAEQSLP…KPESSCPARV (183 aa)) the chain is Cytoplasmic. The chain crosses the membrane as a helical span at residues 184-204 (VAVLSFLLILVSSVVMCMGTI). A helical transmembrane segment spans residues 224 to 244 (NVETACIGWFTLEYLLRLFSS). Topologically, residues 245–249 (PNKLH) are cytoplasmic. The chain crosses the membrane as a helical span at residues 250–270 (FALSFMNIVDVLAILPFYVSL). Residues 290–310 (QALRIMRIARIFKLARHSSGL) form a helical; Voltage-sensor membrane-spanning segment. The Cytoplasmic portion of the chain corresponds to 311–324 (QTLTYALKRSFKEL). The chain crosses the membrane as a helical span at residues 325–345 (GLLLMYLAVGIFVFSALGYTM). The segment at residues 358 to 378 (PQSFWWAIITMTTVGYGDIYP) is an intramembrane region (pore-forming). The Selectivity filter motif lies at 370-375 (TVGYGD). A helical transmembrane segment spans residues 386–406 (NAAISFLCGVIAIALPIHPII). Residues 407–493 (NNFVRYYNKQ…HHRTRLQSCK (87 aa)) lie on the Cytoplasmic side of the membrane. The segment at 434–468 (SSSAEGKPGGSRSDLDTLPPEPAAREGPSWGSRLK) is disordered.

The protein belongs to the potassium channel family. F (TC 1.A.1.2) subfamily. Kv5.1/KCNF1 sub-subfamily. As to quaternary structure, heterotetramer with KCNB1 or KCNB2.

The protein localises to the cell membrane. In terms of biological role, regulatory alpha-subunit of the voltage-gated potassium (Kv) channel which, when coassembled with KCNB1 or KCNB2, can modulate their expression and their gating kinetics by acting on deactivation upon repolarization and inactivation during maintained depolarization. Accelerates inactivation but has relatively little effect on deactivation. Coexpression with KCNB1 or KCNB2 markedly slows inactivation. Each modulatory subunit has its own specific properties of regulation, and can lead to extensive inhibitions, to large changes in kinetics, and/or to large shifts in the voltage dependencies of the inactivation process. The gating kinetics depends on the nature and stoichiometry of the associated regulatory sunbunit. Fails to produce a potassium current when expressed alone. This Mus musculus (Mouse) protein is Voltage-gated potassium channel regulatory subunit KCNF1.